Consider the following 346-residue polypeptide: UDP-3-O-acylglucosamine N-acyltransferase (346 aa).

The active-site Proton acceptor is H240.

It belongs to the transferase hexapeptide repeat family. LpxD subfamily. In terms of assembly, homotrimer.

The catalysed reaction is a UDP-3-O-[(3R)-3-hydroxyacyl]-alpha-D-glucosamine + a (3R)-hydroxyacyl-[ACP] = a UDP-2-N,3-O-bis[(3R)-3-hydroxyacyl]-alpha-D-glucosamine + holo-[ACP] + H(+). It functions in the pathway bacterial outer membrane biogenesis; LPS lipid A biosynthesis. Functionally, catalyzes the N-acylation of UDP-3-O-acylglucosamine using 3-hydroxyacyl-ACP as the acyl donor. Is involved in the biosynthesis of lipid A, a phosphorylated glycolipid that anchors the lipopolysaccharide to the outer membrane of the cell. The polypeptide is UDP-3-O-acylglucosamine N-acyltransferase (Bacteroides fragilis (strain YCH46)).